Consider the following 387-residue polypeptide: MEGGGAPPADTVMSDAAPAPPQMGIENIPAVLSHGGRFIQYNIFGNIFEVTAKYKPPIMPIGKGAYGIVCSAHNSETNEHVAVKKIANAFDNKIDAKRTLREIKLLRHMDHENVVAIRDIVPPPQREVFNDVYIAYELMDTDLHQIIRSNQALSEEHCQYFLYQILRGLKYIHSANVLHRDLKPSNLLLNANCDLKICDFGLARVTSETDFMTEYVVTRWYRAPELLLNSSDYTAAIDVWSVGCIFMELMDRKPLFPGRDHVHQLRLLMELIGTPSEDDLGFLNENAKRYIRQLPPYRRQSFQEKFPHVHPEAIDLVEKMLTFDPRKRITVEDALAHPYLTSLHDISDEPVCMTPFSFDFEQHALTEEQMKELIYREALAFNPEYQQ.

The 286-residue stretch at 55 to 340 (KPPIMPIGKG…VEDALAHPYL (286 aa)) folds into the Protein kinase domain. ATP is bound by residues 61–69 (IGKGAYGIV) and lysine 84. Aspartate 181 acts as the Proton acceptor in catalysis. The residue at position 213 (threonine 213) is a Phosphothreonine. A TXY motif is present at residues 213–215 (TEY). Tyrosine 215 carries the phosphotyrosine modification.

This sequence belongs to the protein kinase superfamily. CMGC Ser/Thr protein kinase family. MAP kinase subfamily. The cofactor is Mg(2+). Post-translationally, dually phosphorylated on Thr-213 and Tyr-215, which activates the enzyme. Autophosphorylated. As to expression, roots and stems.

It catalyses the reaction L-seryl-[protein] + ATP = O-phospho-L-seryl-[protein] + ADP + H(+). The enzyme catalyses L-threonyl-[protein] + ATP = O-phospho-L-threonyl-[protein] + ADP + H(+). Its activity is regulated as follows. Activated by tyrosine and threonine phosphorylation. In terms of biological role, may play a role in the mitogenic induction of symbiotic root nodules on Alfalfa by Rhizobium signal molecules. This Medicago sativa (Alfalfa) protein is Mitogen-activated protein kinase homolog MMK1 (MMK1).